Consider the following 304-residue polypeptide: Protein PagO (304 aa).

10 helical membrane-spanning segments follow: residues 4–24 (VSIS…WLAM), 34–54 (VFAT…IAWL), 67–87 (LFQF…MIYG), 95–115 (LAAI…VLFL), 119–139 (AKLM…GILL), 150–170 (WQGI…YTQC), 180–200 (ITFN…TGWF), 214–234 (ILAT…CYFA), 246–266 (LVFL…YGYA), and 267–287 (ISTH…LTLV). EamA domains are found at residues 15-139 (LTWG…GILL) and 161-287 (LIHA…LTLV).

The protein belongs to the EamA transporter family.

It is found in the cell membrane. The sequence is that of Protein PagO (pagO) from Salmonella typhimurium (strain LT2 / SGSC1412 / ATCC 700720).